The chain runs to 245 residues: Keratin-associated protein 10-12 (245 aa).

Tandem repeats lie at residues 36–40, 41–45, 62–66, 84–88, 94–98, 104–108, 109–113, 114–118, 119–123, 124–128, 131–135, 141–145, 151–155, 156–160, 161–165, 173–177, 183–187, 188–192, and 214–218. The segment at 36–218 is 19 X 5 AA repeats of C-C-X(3); the sequence is CCEPPCCAPA…VPVPSCCVPT (183 aa).

The protein belongs to the KRTAP type 10 family. Interacts with hair keratins. Restricted to a narrow region of the hair fiber cuticle, lying approximately 20 cell layers above the apex of the dermal papilla of the hair root; not detected in any other tissues.

Its function is as follows. In the hair cortex, hair keratin intermediate filaments are embedded in an interfilamentous matrix, consisting of hair keratin-associated proteins (KRTAP), which are essential for the formation of a rigid and resistant hair shaft through their extensive disulfide bond cross-linking with abundant cysteine residues of hair keratins. The matrix proteins include the high-sulfur and high-glycine-tyrosine keratins. In Homo sapiens (Human), this protein is Keratin-associated protein 10-12 (KRTAP10-12).